Consider the following 342-residue polypeptide: uncharacterized protein (342 aa).

The protein belongs to the cycloisomerase 2 family.

This is an uncharacterized protein from Staphylococcus aureus (strain MSSA476).